A 357-amino-acid chain; its full sequence is Aminomethyltransferase (357 aa).

This sequence belongs to the GcvT family. The glycine cleavage system is composed of four proteins: P, T, L and H.

It carries out the reaction N(6)-[(R)-S(8)-aminomethyldihydrolipoyl]-L-lysyl-[protein] + (6S)-5,6,7,8-tetrahydrofolate = N(6)-[(R)-dihydrolipoyl]-L-lysyl-[protein] + (6R)-5,10-methylene-5,6,7,8-tetrahydrofolate + NH4(+). Its function is as follows. The glycine cleavage system catalyzes the degradation of glycine. The sequence is that of Aminomethyltransferase from Halothermothrix orenii (strain H 168 / OCM 544 / DSM 9562).